The primary structure comprises 156 residues: Endogenous retrovirus group K member 10 Pro protein (156 aa).

Positions 21-96 (FEGLVDTGAD…IPLNLWGRDL (76 aa)) constitute a Peptidase A2 domain. Residue Asp26 is part of the active site. The region spanning 111–156 (YSPTSQKIMTKMGYIPGKGLGKNEDGIKVPVEAKINQEREGIGYPF) is the G-patch domain.

It belongs to the peptidase A2 family. HERV class-II K(HML-2) subfamily. As to quaternary structure, active as a homodimer. Autoproteolytically processed at the N-terminus. Expected C-terminal autoprocessing not detected. The sequence shown is that of the processed Pro protein.

It carries out the reaction Processing at the authentic HIV-1 PR recognition site and release of the mature p17 matrix and the p24 capsid protein, as a result of the cleavage of the -SQNY-|-PIVQ- cleavage site.. Its activity is regulated as follows. Resistant to a number of clinically useful HIV-1 PR inhibitors. Inhibited by cyclic urea SD146. Functionally, retroviral proteases have roles in processing of the primary translation products and the maturation of the viral particle. Endogenous Pro proteins may have kept, lost or modified their original function during evolution. This endogenous protein has retained most of the characteristics of retroviral proteases. This Homo sapiens (Human) protein is Endogenous retrovirus group K member 10 Pro protein (ERVK-10).